Consider the following 177-residue polypeptide: ATP-dependent protease subunit HslV (177 aa).

Thr2 is a catalytic residue. Na(+) is bound by residues Ala159, Asp162, and Thr165.

The protein belongs to the peptidase T1B family. HslV subfamily. In terms of assembly, a double ring-shaped homohexamer of HslV is capped on each side by a ring-shaped HslU homohexamer. The assembly of the HslU/HslV complex is dependent on binding of ATP.

Its subcellular location is the cytoplasm. The catalysed reaction is ATP-dependent cleavage of peptide bonds with broad specificity.. With respect to regulation, allosterically activated by HslU binding. In terms of biological role, protease subunit of a proteasome-like degradation complex believed to be a general protein degrading machinery. This Lactobacillus leichmannii protein is ATP-dependent protease subunit HslV.